The chain runs to 314 residues: 2-oxo-3-(phosphooxy)propyl 3-oxoalkanoate synthase (314 aa).

The protein belongs to the AfsA family.

The enzyme catalyses a medium-chain 3-oxoacyl-[ACP] + dihydroxyacetone phosphate = a (4-alkanoyl-5-oxo-2,5-dihydrofuran-3-yl)methyl phosphate + holo-[ACP] + H2O. Its function is as follows. Involved of the biosynthesis of S.coelicolor butanolide 1 (SCB1), a gamma-butyrolactone that triggers antibiotic production. In Streptomyces coelicolor (strain ATCC BAA-471 / A3(2) / M145), this protein is 2-oxo-3-(phosphooxy)propyl 3-oxoalkanoate synthase.